The primary structure comprises 325 residues: Acetyl-coenzyme A carboxylase carboxyl transferase subunit alpha (325 aa).

The CoA carboxyltransferase C-terminal domain maps to 44 to 298 (QLEARADQLR…KAAIQDNLQA (255 aa)).

Belongs to the AccA family. As to quaternary structure, acetyl-CoA carboxylase is a heterohexamer composed of biotin carboxyl carrier protein (AccB), biotin carboxylase (AccC) and two subunits each of ACCase subunit alpha (AccA) and ACCase subunit beta (AccD).

Its subcellular location is the cytoplasm. It carries out the reaction N(6)-carboxybiotinyl-L-lysyl-[protein] + acetyl-CoA = N(6)-biotinyl-L-lysyl-[protein] + malonyl-CoA. Its pathway is lipid metabolism; malonyl-CoA biosynthesis; malonyl-CoA from acetyl-CoA: step 1/1. Functionally, component of the acetyl coenzyme A carboxylase (ACC) complex. First, biotin carboxylase catalyzes the carboxylation of biotin on its carrier protein (BCCP) and then the CO(2) group is transferred by the carboxyltransferase to acetyl-CoA to form malonyl-CoA. The chain is Acetyl-coenzyme A carboxylase carboxyl transferase subunit alpha from Picosynechococcus sp. (strain ATCC 27264 / PCC 7002 / PR-6) (Agmenellum quadruplicatum).